Reading from the N-terminus, the 357-residue chain is MMCMKALEALVSPQTLFYTSNEPFITEFGATLPELQVAYRMWGRLNADKSNVIVICHALTGSADADDWWEGMFGTGKAFDPSEYCIICSNVLGSCYGTTGPTSPNPATGNRYGADFPLITIRDMVRVQHRLLTALGIERIKLVVGASLGGMQVLEWGFLYPEMAQALMAMGASGRHSAWCIGQSEAQRQAIYADRHWNGGSYAPEQPPNHGLAAARMMAMCSYRSFENYQERFGRTMQQGRQGALFSIESYLHHQGRKLVERFDANTYVTLTKAMDMHDVARGRGEYEEVLRSMTLPIEVLSINSDILYPMEEQEELAELMPNASILYLDEPYGHDAFLIEVEKVNQMVNDFLNKLE.

One can recognise an AB hydrolase-1 domain in the interval 51-340 (NVIVICHALT…EPYGHDAFLI (290 aa)). Catalysis depends on Ser-147, which acts as the Nucleophile. Position 216 (Arg-216) interacts with substrate. Residues Asp-306 and His-335 contribute to the active site. Position 336 (Asp-336) interacts with substrate.

Belongs to the AB hydrolase superfamily. MetX family. Homodimer.

Its subcellular location is the cytoplasm. The enzyme catalyses L-homoserine + acetyl-CoA = O-acetyl-L-homoserine + CoA. It participates in amino-acid biosynthesis; L-methionine biosynthesis via de novo pathway; O-acetyl-L-homoserine from L-homoserine: step 1/1. Functionally, transfers an acetyl group from acetyl-CoA to L-homoserine, forming acetyl-L-homoserine. The sequence is that of Homoserine O-acetyltransferase from Chlorobium chlorochromatii (strain CaD3).